The primary structure comprises 426 residues: Chordin-like protein 2 (426 aa).

The N-terminal stretch at 1 to 25 (MVPGVRIIPSLLGLVMFWLPLDSQA) is a signal peptide. VWFC domains lie at 31–96 (KVCL…PRCV) and 109–175 (KSCQ…QTCK). A glycan (N-linked (GlcNAc...) asparagine) is linked at N114. S182 carries the phosphoserine modification. Residues 182–191 (STEENLTQLQ) are compositionally biased toward polar residues. A disordered region spans residues 182 to 216 (STEENLTQLQHGERHSQDPCSERRGPSTPAPTSLS). N-linked (GlcNAc...) asparagine glycosylation occurs at N186. A compositionally biased stretch (basic and acidic residues) spans 192–206 (HGERHSQDPCSERRG). Positions 207–216 (PSTPAPTSLS) are enriched in low complexity. The 66-residue stretch at 246 to 311 (KACTHNGKTY…VAGKCCKICP (66 aa)) folds into the VWFC 3 domain.

Interacts with GDF5. May interact with INHBA, BMP2, BMP4, BMP5, BMP6, and BMP7. In terms of tissue distribution, weakly expressed in the liver and kidney. In reproductive organs expressed in connective tissues such as ligaments of the ovary and oviduct in females, and of testis, epididymis and certain male accessory sex glands in males. Expression was high in uterine myometrium. Weakly expressed in cartilage of the femoral head, patella, articular facets of vertebrae, in the annulus fibrosus of intervertebral disks. In normal cartilage, expression was confined to articular chondrocytes especially in the superficial zone.

The protein localises to the secreted. Its function is as follows. Implicated in tumor angiogenesis. May inhibits BMPs activity by blocking their interaction with their receptors. Has a negative regulator effect on the cartilage formation/regeneration from immature mesenchymal cells, by preventing or reducing the rate of matrix accumulation. May play a role during myoblast and osteoblast differentiation, and maturation. The chain is Chordin-like protein 2 (Chrdl2) from Mus musculus (Mouse).